A 361-amino-acid chain; its full sequence is Peptide chain release factor 1 (361 aa).

At glutamine 233 the chain carries N5-methylglutamine. The disordered stretch occupies residues 282–310; sequence SKKQAERAQNRKSQVGSGDRSERIRTYNF.

This sequence belongs to the prokaryotic/mitochondrial release factor family. Post-translationally, methylated by PrmC. Methylation increases the termination efficiency of RF1.

It is found in the cytoplasm. Functionally, peptide chain release factor 1 directs the termination of translation in response to the peptide chain termination codons UAG and UAA. The chain is Peptide chain release factor 1 from Treponema denticola (strain ATCC 35405 / DSM 14222 / CIP 103919 / JCM 8153 / KCTC 15104).